Reading from the N-terminus, the 327-residue chain is tRNA N6-adenosine threonylcarbamoyltransferase (327 aa).

Fe cation contacts are provided by His-109 and His-113. Substrate contacts are provided by residues 132–136 (MVSGG), Asp-165, Gly-178, Asp-182, and Asn-268. Residue Asp-296 participates in Fe cation binding.

Belongs to the KAE1 / TsaD family. It depends on Fe(2+) as a cofactor.

It is found in the cytoplasm. The catalysed reaction is L-threonylcarbamoyladenylate + adenosine(37) in tRNA = N(6)-L-threonylcarbamoyladenosine(37) in tRNA + AMP + H(+). Functionally, required for the formation of a threonylcarbamoyl group on adenosine at position 37 (t(6)A37) in tRNAs that read codons beginning with adenine. Is involved in the transfer of the threonylcarbamoyl moiety of threonylcarbamoyl-AMP (TC-AMP) to the N6 group of A37, together with TsaE and TsaB. TsaD likely plays a direct catalytic role in this reaction. In Thermotoga neapolitana (strain ATCC 49049 / DSM 4359 / NBRC 107923 / NS-E), this protein is tRNA N6-adenosine threonylcarbamoyltransferase.